We begin with the raw amino-acid sequence, 256 residues long: Hydroxyacylglutathione hydrolase (256 aa).

Residues H58, H60, D62, H63, H116, D135, and H173 each contribute to the Zn(2+) site.

Belongs to the metallo-beta-lactamase superfamily. Glyoxalase II family. In terms of assembly, monomer. It depends on Zn(2+) as a cofactor.

It carries out the reaction an S-(2-hydroxyacyl)glutathione + H2O = a 2-hydroxy carboxylate + glutathione + H(+). The protein operates within secondary metabolite metabolism; methylglyoxal degradation; (R)-lactate from methylglyoxal: step 2/2. In terms of biological role, thiolesterase that catalyzes the hydrolysis of S-D-lactoyl-glutathione to form glutathione and D-lactic acid. The polypeptide is Hydroxyacylglutathione hydrolase (Hyphomonas neptunium (strain ATCC 15444)).